A 459-amino-acid polypeptide reads, in one-letter code: 1,3-beta-glucanosyltransferase gas2 (459 aa).

The N-terminal stretch at Met1–Ala19 is a signal peptide. 2 N-linked (GlcNAc...) asparagine glycosylation sites follow: Asn34 and Asn68. A disulfide bridge links Cys69 with Cys98. Tyr87 is a (1,3-beta-D-glucosyl)n binding site. N-linked (GlcNAc...) asparagine glycosylation is found at Asn90, Asn104, and Asn146. Residues Asn155 and Glu156 each coordinate (1,3-beta-D-glucosyl)n. The active-site Proton donor is Glu156. Asn160 carries N-linked (GlcNAc...) asparagine glycosylation. (1,3-beta-D-glucosyl)n contacts are provided by Asp197 and Arg202. Intrachain disulfides connect Cys211/Cys350 and Cys235/Cys266. 3 N-linked (GlcNAc...) asparagine glycosylation sites follow: Asn212, Asn218, and Asn254. Catalysis depends on Glu263, which acts as the Nucleophile. Asn284 carries N-linked (GlcNAc...) asparagine glycosylation. Position 295 (Tyr295) interacts with (1,3-beta-D-glucosyl)n. N-linked (GlcNAc...) asparagine glycosylation is found at Asn308, Asn334, Asn344, Asn354, and Asn370. Disulfide bonds link Cys374-Cys427, Cys383-Cys449, and Cys402-Cys409. A glycan (N-linked (GlcNAc...) asparagine) is linked at Asn423.

This sequence belongs to the glycosyl hydrolase 72 family.

It localises to the endoplasmic reticulum lumen. It is found in the secreted. In terms of biological role, splits internally a 1,3-beta-glucan molecule and transfers the newly generated reducing end (the donor) to the non-reducing end of another 1,3-beta-glucan molecule (the acceptor) forming a 1,3-beta linkage, resulting in the elongation of 1,3-beta-glucan chains in the cell wall. The sequence is that of 1,3-beta-glucanosyltransferase gas2 (gas2) from Schizosaccharomyces pombe (strain 972 / ATCC 24843) (Fission yeast).